The primary structure comprises 451 residues: Glutamyl-tRNA reductase (451 aa).

Substrate-binding positions include T49–R52, S109, E114–Q116, and Q120. Residue C50 is the Nucleophile of the active site. G190–G195 provides a ligand contact to NADP(+).

Belongs to the glutamyl-tRNA reductase family. In terms of assembly, homodimer.

The enzyme catalyses (S)-4-amino-5-oxopentanoate + tRNA(Glu) + NADP(+) = L-glutamyl-tRNA(Glu) + NADPH + H(+). Its pathway is porphyrin-containing compound metabolism; protoporphyrin-IX biosynthesis; 5-aminolevulinate from L-glutamyl-tRNA(Glu): step 1/2. Functionally, catalyzes the NADPH-dependent reduction of glutamyl-tRNA(Glu) to glutamate 1-semialdehyde (GSA). This Mycolicibacterium smegmatis (strain ATCC 700084 / mc(2)155) (Mycobacterium smegmatis) protein is Glutamyl-tRNA reductase.